We begin with the raw amino-acid sequence, 412 residues long: MIEEEVLKIIKPTEEDKKGIEKVLEIIRERLNKLDFEVEGSFRKGTWLRQDTDIDVFVFYPKDVGKEYLERNALNDIINRIKDLDYTLAYAEHPYVIVNINNVEVDIVPALRVESGDKAITAVDRTPFHTKYVTSHLDERGKDEVRLLKRFMKGIGVYGAELKVQGFSGYATELLIIYYGNFRKVLEEASKWKHPIKIELTKPMKIFSEPLIIPDPVDPKRNVTAAVSLKNIATFSIAAKYYLKNPSIEFFFPSKKVEEKVKGDVLILRLNLDEKSSEDIVWGQIKRSVNKIERALKQYGFRVIDVQAWGDTNNITIAVQLESKNIGQYYLNIGPQYYSGTIEDFIQKNDNIWVGEDGRLYSIKERKEYDAETIAKKNIVLKVKYNIESYWLQNTEDQQIMKFLRKTPTWLK.

ATP contacts are provided by serine 41 and lysine 44. Positions 41 and 44 each coordinate CTP. Mg(2+) contacts are provided by aspartate 53, aspartate 55, and aspartate 106. Residues histidine 129, lysine 149, and tyrosine 158 each coordinate ATP. Positions 129, 149, and 158 each coordinate CTP.

It belongs to the tRNA nucleotidyltransferase/poly(A) polymerase family. Archaeal CCA-adding enzyme subfamily. As to quaternary structure, homodimer. Mg(2+) serves as cofactor.

It catalyses the reaction a tRNA precursor + 2 CTP + ATP = a tRNA with a 3' CCA end + 3 diphosphate. The enzyme catalyses a tRNA with a 3' CCA end + 2 CTP + ATP = a tRNA with a 3' CCACCA end + 3 diphosphate. Catalyzes the addition and repair of the essential 3'-terminal CCA sequence in tRNAs without using a nucleic acid template. Adds these three nucleotides in the order of C, C, and A to the tRNA nucleotide-73, using CTP and ATP as substrates and producing inorganic pyrophosphate. tRNA 3'-terminal CCA addition is required both for tRNA processing and repair. Also involved in tRNA surveillance by mediating tandem CCA addition to generate a CCACCA at the 3' terminus of unstable tRNAs. While stable tRNAs receive only 3'-terminal CCA, unstable tRNAs are marked with CCACCA and rapidly degraded. In Saccharolobus solfataricus (strain ATCC 35092 / DSM 1617 / JCM 11322 / P2) (Sulfolobus solfataricus), this protein is CCA-adding enzyme.